A 630-amino-acid chain; its full sequence is Chaperone protein HtpG (630 aa).

Residues 1–338 (MTVEANKETL…SNDLSLNVSR (338 aa)) are a; substrate-binding. The segment at 339–555 (EILQNDSTVE…QFDMGAQMKK (217 aa)) is b. The segment at 556–630 (IMEAAGQKVP…LNRLLLELAN (75 aa)) is c.

The protein belongs to the heat shock protein 90 family. Homodimer.

Its subcellular location is the cytoplasm. Functionally, molecular chaperone. Has ATPase activity. The protein is Chaperone protein HtpG of Marinobacter nauticus (strain ATCC 700491 / DSM 11845 / VT8) (Marinobacter aquaeolei).